Here is a 471-residue protein sequence, read N- to C-terminus: Glutamate--tRNA ligase (471 aa).

Positions 9–19 match the 'HIGH' region motif; that stretch reads PSPTGYLHVGG. The Zn(2+) site is built by Cys98, Cys100, Cys125, and His127. Residues 237 to 241 carry the 'KMSKS' region motif; it reads KLSKR. Lys240 lines the ATP pocket.

Belongs to the class-I aminoacyl-tRNA synthetase family. Glutamate--tRNA ligase type 1 subfamily. Monomer. It depends on Zn(2+) as a cofactor.

Its subcellular location is the cytoplasm. The enzyme catalyses tRNA(Glu) + L-glutamate + ATP = L-glutamyl-tRNA(Glu) + AMP + diphosphate. In terms of biological role, catalyzes the attachment of glutamate to tRNA(Glu) in a two-step reaction: glutamate is first activated by ATP to form Glu-AMP and then transferred to the acceptor end of tRNA(Glu). This chain is Glutamate--tRNA ligase, found in Salmonella choleraesuis (strain SC-B67).